The following is a 294-amino-acid chain: Nucleotide-binding protein Tfu_2020 (294 aa).

18–25 (GMSGAGRS) is an ATP binding site. Position 69 to 72 (69 to 72 (DVRS)) interacts with GTP.

The protein belongs to the RapZ-like family.

In terms of biological role, displays ATPase and GTPase activities. The protein is Nucleotide-binding protein Tfu_2020 of Thermobifida fusca (strain YX).